A 73-amino-acid polypeptide reads, in one-letter code: Crustacean hyperglycemic hormone (73 aa).

3 disulfide bridges follow: Cys7–Cys43, Cys23–Cys39, and Cys26–Cys52. Ser73 carries the post-translational modification Serine amide.

As to expression, produced by the medulla terminalis X-organ in the eyestalks and transported to the sinus gland where they are stored and released. Found also in the brain; in the neuroendocrine structures of the protocerebrum.

Its subcellular location is the secreted. Hormone found in the sinus gland of isopods and decapods which controls the blood sugar level. Has a secretagogue action over the amylase released from the midgut gland. May act as a stress hormone and may be involved in the control of molting and reproduction. The sequence is that of Crustacean hyperglycemic hormone from Armadillidium vulgare (Pillbug).